Reading from the N-terminus, the 264-residue chain is 3-methyl-2-oxobutanoate hydroxymethyltransferase (264 aa).

Mg(2+)-binding residues include D41 and D80. 3-methyl-2-oxobutanoate is bound by residues 41 to 42, D80, and K109; that span reads DS. E111 is a Mg(2+) binding site. E178 acts as the Proton acceptor in catalysis.

The protein belongs to the PanB family. As to quaternary structure, homodecamer; pentamer of dimers. Requires Mg(2+) as cofactor.

The protein resides in the cytoplasm. It carries out the reaction 3-methyl-2-oxobutanoate + (6R)-5,10-methylene-5,6,7,8-tetrahydrofolate + H2O = 2-dehydropantoate + (6S)-5,6,7,8-tetrahydrofolate. The protein operates within cofactor biosynthesis; (R)-pantothenate biosynthesis; (R)-pantoate from 3-methyl-2-oxobutanoate: step 1/2. Catalyzes the reversible reaction in which hydroxymethyl group from 5,10-methylenetetrahydrofolate is transferred onto alpha-ketoisovalerate to form ketopantoate. The protein is 3-methyl-2-oxobutanoate hydroxymethyltransferase of Thermosipho melanesiensis (strain DSM 12029 / CIP 104789 / BI429).